Here is a 255-residue protein sequence, read N- to C-terminus: Aliphatic sulfonates import ATP-binding protein SsuB (255 aa).

An ABC transporter domain is found at 7–231; that stretch reads IKEKAFVQEG…PRNRTTPDFQ (225 aa). Position 39 to 46 (39 to 46) interacts with ATP; it reads GPSGCGKS.

Belongs to the ABC transporter superfamily. Aliphatic sulfonates importer (TC 3.A.1.17.2) family. In terms of assembly, the complex is composed of two ATP-binding proteins (SsuB), two transmembrane proteins (SsuC) and a solute-binding protein (SsuA).

The protein resides in the cell membrane. It catalyses the reaction ATP + H2O + aliphatic sulfonate-[sulfonate-binding protein]Side 1 = ADP + phosphate + aliphatic sulfonateSide 2 + [sulfonate-binding protein]Side 1.. In terms of biological role, part of the ABC transporter complex SsuABC involved in aliphatic sulfonates import. Responsible for energy coupling to the transport system. Is also involved in taurine transport. This Bacillus subtilis (strain 168) protein is Aliphatic sulfonates import ATP-binding protein SsuB.